A 292-amino-acid polypeptide reads, in one-letter code: Ribosomal RNA small subunit methyltransferase A (292 aa).

S-adenosyl-L-methionine-binding residues include N29, L31, G56, E77, D102, and N127.

It belongs to the class I-like SAM-binding methyltransferase superfamily. rRNA adenine N(6)-methyltransferase family. RsmA subfamily.

It is found in the cytoplasm. The catalysed reaction is adenosine(1518)/adenosine(1519) in 16S rRNA + 4 S-adenosyl-L-methionine = N(6)-dimethyladenosine(1518)/N(6)-dimethyladenosine(1519) in 16S rRNA + 4 S-adenosyl-L-homocysteine + 4 H(+). Specifically dimethylates two adjacent adenosines (A1518 and A1519) in the loop of a conserved hairpin near the 3'-end of 16S rRNA in the 30S particle. May play a critical role in biogenesis of 30S subunits. This is Ribosomal RNA small subunit methyltransferase A from Bacillus licheniformis (strain ATCC 14580 / DSM 13 / JCM 2505 / CCUG 7422 / NBRC 12200 / NCIMB 9375 / NCTC 10341 / NRRL NRS-1264 / Gibson 46).